A 243-amino-acid polypeptide reads, in one-letter code: DNA repair protein RecO (243 aa).

This sequence belongs to the RecO family.

Its function is as follows. Involved in DNA repair and RecF pathway recombination. The polypeptide is DNA repair protein RecO (Azoarcus sp. (strain BH72)).